We begin with the raw amino-acid sequence, 54 residues long: Large ribosomal subunit protein bL33 (54 aa).

It belongs to the bacterial ribosomal protein bL33 family.

The protein is Large ribosomal subunit protein bL33 of Stenotrophomonas maltophilia (strain R551-3).